A 1117-amino-acid polypeptide reads, in one-letter code: Protein ECM21 (1117 aa).

2 disordered regions span residues 1–48 (MPFI…RRSS) and 63–155 (VHSP…YSQI). The segment covering 11–34 (KNSSHSLSETDLNQSKGQPFQPSP) has biased composition (polar residues). S18 carries the phosphoserine modification. A compositionally biased stretch (low complexity) spans 70 to 81 (NNTTKGGNNNGN). S115 bears the Phosphoserine mark. Low complexity predominate over residues 117–130 (SDSATTTPRSSTSD). The residue at position 140 (S140) is a Phosphoserine. K191 is covalently cross-linked (Glycyl lysine isopeptide (Lys-Gly) (interchain with G-Cter in ubiquitin)). 2 disordered regions span residues 275-312 (ATTA…ELNT) and 486-523 (YRQD…AQAH). S286 bears the Phosphoserine mark. Residues 501-519 (SSSSLSSTTSSLKLTETES) show a composition bias toward low complexity. Phosphoserine occurs at positions 527 and 550. Residues K577, K651, and K712 each participate in a glycyl lysine isopeptide (Lys-Gly) (interchain with G-Cter in ubiquitin) cross-link. S775 bears the Phosphoserine mark. Glycyl lysine isopeptide (Lys-Gly) (interchain with G-Cter in ubiquitin) cross-links involve residues K794, K807, and K1024. 2 disordered regions span residues 1016–1065 (RSRF…KDKQ) and 1079–1117 (KDDE…SDEE). The span at 1027-1059 (STPSPVNRSHNSSPTNGLSQANGTVRIPNATTE) shows a compositional bias: polar residues. S1035 carries the post-translational modification Phosphoserine. The span at 1089 to 1098 (SSSSADSLLS) shows a compositional bias: low complexity.

It belongs to the CSR2 family.

The protein localises to the cytoplasm. In terms of biological role, may be involved in cell wall organization and biogenesis. The protein is Protein ECM21 (ECM21) of Saccharomyces cerevisiae (strain ATCC 204508 / S288c) (Baker's yeast).